A 306-amino-acid chain; its full sequence is MPIRIPDQLPARKTLETEGVVVMDQSRSARQDIRPLQFGLLNLMPNKQRTETQFARLIASTPLQIDLTLVRVADPLSKSTPEDYLQNFYSTWEDVRAKKFDGFVVTGAPIANMPFEDVRYWPEMLEIMDWTQTNVHHTMFICWGAQAALHHLHGVKRYRMEHKAFGVYRHKVLDTRHPFLRGFSDDLAVPVSRYNDIDRQSLSPDLDILIDSDEVGICMLDDRKYRAAYMLNHLEYDNTSLADEYHRDIEAGLDTPLPVNLFPGNDPSRMPENRWRSHAHLLFQNWINEIYQTTPYELEKVGTGEW.

The active-site Acyl-thioester intermediate is Cys142. Residues Lys163 and Ser192 each coordinate substrate. The active-site Proton acceptor is the His233. Residue Glu235 is part of the active site. A substrate-binding site is contributed by Arg247.

This sequence belongs to the MetA family.

The protein resides in the cytoplasm. It catalyses the reaction L-homoserine + succinyl-CoA = O-succinyl-L-homoserine + CoA. It participates in amino-acid biosynthesis; L-methionine biosynthesis via de novo pathway; O-succinyl-L-homoserine from L-homoserine: step 1/1. Transfers a succinyl group from succinyl-CoA to L-homoserine, forming succinyl-L-homoserine. This is Homoserine O-succinyltransferase from Pelagibacterium halotolerans (strain DSM 22347 / JCM 15775 / CGMCC 1.7692 / B2).